The chain runs to 100 residues: MSGMEWFPLLGLANRARKVVSGEDLVIKEIRNARAKLVLLTEDASSNTAKKVTDKCNYYKVPYKKVESRAVLGRSIGKEARVVVAVTDQGFANKLISLLD.

This sequence belongs to the eukaryotic ribosomal protein eL8 family.

In terms of biological role, RNA-binding protein that recognizes the K-turn motif present in ribosomal RNA, but also in box C/D and box C'/D' sRNAs. In Bacillus subtilis (strain 168), this protein is RNA-binding protein YlxQ.